Reading from the N-terminus, the 448-residue chain is Signal recognition particle 54 kDa protein (448 aa).

GTP contacts are provided by residues 107 to 114, 189 to 193, and 247 to 250; these read GIQGSGKT, DSAGR, and TKLD.

Belongs to the GTP-binding SRP family. SRP54 subfamily. As to quaternary structure, part of the signal recognition particle protein translocation system, which is composed of SRP and FtsY. Archaeal SRP consists of a 7S RNA molecule of 300 nucleotides and two protein subunits: SRP54 and SRP19.

It localises to the cytoplasm. The catalysed reaction is GTP + H2O = GDP + phosphate + H(+). Its function is as follows. Involved in targeting and insertion of nascent membrane proteins into the cytoplasmic membrane. Binds to the hydrophobic signal sequence of the ribosome-nascent chain (RNC) as it emerges from the ribosomes. The SRP-RNC complex is then targeted to the cytoplasmic membrane where it interacts with the SRP receptor FtsY. The sequence is that of Signal recognition particle 54 kDa protein from Thermococcus onnurineus (strain NA1).